The primary structure comprises 1964 residues: Probable helicase with zinc finger domain (1964 aa).

The C3H1-type zinc finger occupies S178–E206. Phosphoserine is present on S248. Residue G668 to T675 participates in ATP binding. The DEAA box signature appears at D794–A797. Over residues H1116–P1127 the composition is skewed to polar residues. The segment at H1116–H1135 is disordered. T1163 carries the post-translational modification Phosphothreonine. Residue R1245 is modified to Omega-N-methylarginine. Disordered stretches follow at residues P1248–P1350, H1360–T1379, L1388–P1449, Q1463–T1491, Q1631–N1655, and Q1743–K1964. Basic and acidic residues-rich tracts occupy residues H1268 to K1281 and N1292 to D1308. Positions P1365–A1374 are enriched in pro residues. Residues L1388–P1431 are compositionally biased toward low complexity. A compositionally biased stretch (pro residues) spans R1635–P1644. 4 positions are modified to phosphoserine: S1636, S1760, S1763, and S1788. Residues S1755–P1765 are compositionally biased toward polar residues. Composition is skewed to polar residues over residues P1799 to S1813 and W1826 to P1849. The segment covering K1860–S1870 has biased composition (basic and acidic residues). 2 stretches are compositionally biased toward polar residues: residues E1872 to M1881 and I1897 to A1910. Residues P1941–S1956 show a composition bias toward low complexity.

Belongs to the DNA2/NAM7 helicase family. As to quaternary structure, interacts with POLR2A. Interacts with SMYD3; the interaction may bridge SMYD3 and RNA polymerase II. Interacts with SMYD2.

It is found in the nucleus. May act as a helicase that plays a role in RNA metabolism in multiple tissues and organs within the developing embryo. The chain is Probable helicase with zinc finger domain (Helz) from Mus musculus (Mouse).